A 108-amino-acid polypeptide reads, in one-letter code: MFEGFDLSKMNEMLGDLQKKAQQMENENANREFSVKSGAGMVEIKISGKGEVLDVSIDDSLMSDKDSLQILLISAINDAVKLIDNEKKNLAAKMLGDIGNLGGFGCEK.

The protein belongs to the YbaB/EbfC family. As to quaternary structure, homodimer.

It is found in the cytoplasm. Its subcellular location is the nucleoid. Functionally, binds to DNA and alters its conformation. May be involved in regulation of gene expression, nucleoid organization and DNA protection. The chain is Nucleoid-associated protein CHAB381_0200 from Campylobacter hominis (strain ATCC BAA-381 / DSM 21671 / CCUG 45161 / LMG 19568 / NCTC 13146 / CH001A).